The sequence spans 479 residues: Cyclic AMP-responsive element-binding protein 3-like protein 3 (479 aa).

Topologically, residues 1–317 (MDGDIAAGKM…QSTSKPAHAG (317 aa)) are cytoplasmic. Positions 67–144 (CILGPGDSDP…CPEPPRTQVQ (78 aa)) are disordered. Residues 98 to 110 (PQDTPPRSGTEPA) show a composition bias toward polar residues. The region spanning 239-302 (VLKKIRRKIR…LSLLEQLKHL (64 aa)) is the bZIP domain. A basic motif region spans residues 241–270 (KKIRRKIRNKQSAQESRKKKKEYIDGLENR). Positions 281-302 (LQRKVLHLEKQNLSLLEQLKHL) are leucine-zipper. Residue Lys-290 forms a Glycyl lysine isopeptide (Lys-Gly) (interchain with G-Cter in ubiquitin) linkage. A helical; Signal-anchor for type II membrane protein membrane pass occupies residues 318-338 (TCIAVLLLSFALIILPSISPF). The Lumenal segment spans residues 339–479 (NSNKVDSPGD…RLVQDALGVL (141 aa)). N-linked (GlcNAc...) asparagine glycans are attached at residues Asn-411, Asn-418, and Asn-425.

The protein belongs to the bZIP family. ATF subfamily. As to quaternary structure, binds DNA as a dimer. May form homodimers. Interacts with ATF6. Interacts with SYNV1/HRD1; this interaction leads to CREB3L3 ubiquitination and proteasomal degradation. Following ER stress a fragment containing the cytoplasmic transcription factor domain is released by proteolysis. The cleavage seems to be performed sequentially by site-1 and site-2 proteases. In terms of processing, N-glycosylation is required for optimal proteolytic activation. Post-translationally, ubiquitinated at Lys-290 by SYNV1/HRD1 via 'Lys-27'-linked ubiquitin. In terms of tissue distribution, expressed in adult liver (at protein level) and small intestine.

It localises to the endoplasmic reticulum membrane. The protein resides in the nucleus. Transcription factor that may act during endoplasmic reticulum (ER) stress by activating unfolded protein response target genes. Activated in response to cAMP stimulation. Binds to the cAMP response element (CRE). Activates transcription through box-B element. Activates transcription through CRE. May function synergistically with ATF6. In acute inflammatory response, may activate expression of acute phase response (APR) genes. May be involved in growth suppression. Regulates FGF21 transcription. Plays a crucial role in the regulation of triglyceride metabolism and is required for the maintenance of normal plasma triglyceride concentrations. This Mus musculus (Mouse) protein is Cyclic AMP-responsive element-binding protein 3-like protein 3 (Creb3l3).